The following is a 100-amino-acid chain: NAD(P)H-quinone oxidoreductase subunit 4L, chloroplastic (100 aa).

3 helical membrane passes run 1-21 (MLEHALILGAYLFSIGIYGLV), 31-51 (MCLELILNAVNLNLVTFSNFF), and 63-83 (IFVIAIAAAEAAIGLAIVLAI).

It belongs to the complex I subunit 4L family. As to quaternary structure, NDH is composed of at least 16 different subunits, 5 of which are encoded in the nucleus.

It is found in the plastid. The protein resides in the chloroplast thylakoid membrane. The enzyme catalyses a plastoquinone + NADH + (n+1) H(+)(in) = a plastoquinol + NAD(+) + n H(+)(out). It catalyses the reaction a plastoquinone + NADPH + (n+1) H(+)(in) = a plastoquinol + NADP(+) + n H(+)(out). Functionally, NDH shuttles electrons from NAD(P)H:plastoquinone, via FMN and iron-sulfur (Fe-S) centers, to quinones in the photosynthetic chain and possibly in a chloroplast respiratory chain. The immediate electron acceptor for the enzyme in this species is believed to be plastoquinone. Couples the redox reaction to proton translocation, and thus conserves the redox energy in a proton gradient. The chain is NAD(P)H-quinone oxidoreductase subunit 4L, chloroplastic from Cryptomeria japonica (Japanese cedar).